A 437-amino-acid polypeptide reads, in one-letter code: Chromosomal replication initiator protein DnaA (437 aa).

Residues 1–82 (MIFPIWKKCL…KIIINIEKKK (82 aa)) are domain I, interacts with DnaA modulators. The segment at 82–101 (KLEKKKCIYKKKNIQIYLHS) is domain II. Positions 102–318 (EINKKYQFHN…GILKKIQILS (217 aa)) are domain III, AAA+ region. Residues Gly146, Gly148, Lys149, and Thr150 each contribute to the ATP site. The domain IV, binds dsDNA stretch occupies residues 319 to 437 (ILNKEKITIN…FIYLFNQLNA (119 aa)).

Belongs to the DnaA family. Oligomerizes as a right-handed, spiral filament on DNA at oriC.

The protein resides in the cytoplasm. Functionally, plays an essential role in the initiation and regulation of chromosomal replication. ATP-DnaA binds to the origin of replication (oriC) to initiate formation of the DNA replication initiation complex once per cell cycle. Binds the DnaA box (a 9 base pair repeat at the origin) and separates the double-stranded (ds)DNA. Forms a right-handed helical filament on oriC DNA; dsDNA binds to the exterior of the filament while single-stranded (ss)DNA is stabiized in the filament's interior. The ATP-DnaA-oriC complex binds and stabilizes one strand of the AT-rich DNA unwinding element (DUE), permitting loading of DNA polymerase. After initiation quickly degrades to an ADP-DnaA complex that is not apt for DNA replication. Binds acidic phospholipids. The sequence is that of Chromosomal replication initiator protein DnaA from Buchnera aphidicola subsp. Cinara cedri (strain Cc).